The sequence spans 348 residues: Protein RecA (348 aa).

67–74 (GPESSGKT) contributes to the ATP binding site.

It belongs to the RecA family.

The protein localises to the cytoplasm. Can catalyze the hydrolysis of ATP in the presence of single-stranded DNA, the ATP-dependent uptake of single-stranded DNA by duplex DNA, and the ATP-dependent hybridization of homologous single-stranded DNAs. It interacts with LexA causing its activation and leading to its autocatalytic cleavage. This is Protein RecA from Amycolatopsis mediterranei (strain U-32).